Consider the following 417-residue polypeptide: Diphosphomevalonate decarboxylase 1 (417 aa).

22–25 (YWGK) contacts (R)-5-diphosphomevalonate. The Peroxisomal targeting signal PTS2 motif lies at 39 to 47 (RVSLDPDHL). (R)-5-diphosphomevalonate contacts are provided by residues R77, 160–165 (SGSACR), and T216.

Belongs to the diphosphomevalonate decarboxylase family. As to quaternary structure, homodimer.

Its subcellular location is the peroxisome. It catalyses the reaction (R)-5-diphosphomevalonate + ATP = isopentenyl diphosphate + ADP + phosphate + CO2. It functions in the pathway isoprenoid biosynthesis; isopentenyl diphosphate biosynthesis via mevalonate pathway; isopentenyl diphosphate from (R)-mevalonate: step 3/3. Its function is as follows. Performs the first committed step in the biosynthesis of isoprene-containing compounds such as sterols and terpenoids. Component of the triterpene saponins (e.g. ginsenosides or panaxosides) and phytosterols biosynthetic pathways. Catalyzes the conversion of mevalonate diphosphate to isopentenyl diphosphate (IPP). This chain is Diphosphomevalonate decarboxylase 1, found in Panax ginseng (Korean ginseng).